A 445-amino-acid chain; its full sequence is Trigger factor (445 aa).

Residues 164–249 form the PPIase FKBP-type domain; sequence GDQVTFDFEG…VKKVEEAKLP (86 aa).

The protein belongs to the FKBP-type PPIase family. Tig subfamily.

It localises to the cytoplasm. It catalyses the reaction [protein]-peptidylproline (omega=180) = [protein]-peptidylproline (omega=0). Involved in protein export. Acts as a chaperone by maintaining the newly synthesized protein in an open conformation. Functions as a peptidyl-prolyl cis-trans isomerase. The polypeptide is Trigger factor (Psychrobacter sp. (strain PRwf-1)).